We begin with the raw amino-acid sequence, 635 residues long: Chaperone protein HtpG (635 aa).

An a; substrate-binding region spans residues M1 to R346. Residues E347 to R563 are b. Residues M564–A635 form a c region.

It belongs to the heat shock protein 90 family. As to quaternary structure, homodimer.

It is found in the cytoplasm. Molecular chaperone. Has ATPase activity. The polypeptide is Chaperone protein HtpG (Bordetella pertussis (strain Tohama I / ATCC BAA-589 / NCTC 13251)).